Here is a 481-residue protein sequence, read N- to C-terminus: Protein NRT1/ PTR FAMILY 1.3 (481 aa).

Helical transmembrane passes span 32 to 52 (LAYF…YGMG), 57 to 77 (ANIL…GAFI), 88 to 108 (IGFG…TTII), 124 to 144 (LLKS…AGGV), 173 to 193 (FNWY…LLVF), 202 to 222 (IGFG…FAAS), 259 to 279 (IWST…FIVL), 302 to 322 (IFLV…IVPL), 333 to 353 (LGVM…ISAL), 374 to 394 (AMWL…NTIA), 422 to 442 (ASLI…GSWI), and 451 to 471 (LDYY…YFVW).

This sequence belongs to the major facilitator superfamily. Proton-dependent oligopeptide transporter (POT/PTR) (TC 2.A.17) family. In terms of tissue distribution, expressed in roots.

The protein localises to the membrane. The chain is Protein NRT1/ PTR FAMILY 1.3 (NPF1.3) from Arabidopsis thaliana (Mouse-ear cress).